The chain runs to 242 residues: MSGHSKWHNIQGRKNAQDAKRGKIFQKLSREIYMAAKSGGPDPDGNPTLRMVIDKARSNNMPKDNIKRAIKKAEGGSEEHYDEITYEGYAPGGVAVFVEALTDNKNRTASDVRVAFTRNGGSLGATGSVAYMFDRKGYIVIDRSTTDADEDQVLLDVMDAGGDDLQTSDDAFEIYTDPKQFADVRDALIKDGYKLADAELTMIPQNTTPVPADKKEQFEHLVDALEDSDDVQNVYTAAADED.

Residues 1–22 (MSGHSKWHNIQGRKNAQDAKRG) are disordered.

The protein belongs to the TACO1 family.

It localises to the cytoplasm. The polypeptide is Probable transcriptional regulatory protein lhv_0777 (Lactobacillus helveticus (strain DPC 4571)).